The sequence spans 188 residues: Ion-translocating oxidoreductase complex subunit G (188 aa).

The Cytoplasmic segment spans residues 1-9 (MSDSKEITK). A helical membrane pass occupies residues 10-30 (VIVTMVVISAVAAALLALTYT). Topologically, residues 31–188 (PTQAQLKLLQ…AVDYVSAQEG (158 aa)) are extracellular. T166 is modified (FMN phosphoryl threonine).

This sequence belongs to the RnfG family. In terms of assembly, the Rnf complex is probably composed of eight subunits, including RnfA, RnfB, RnfC, RnfD, RnfE and RnfG. FMN serves as cofactor.

Its subcellular location is the cell membrane. Part of a membrane-bound complex that couples electron transfer with translocation of ions across the membrane. Catalyzes Na(+) transport, most probably coupled to electron transfer from reduced ferredoxin to methanophenazine and heterodisulfide reductase. Involved in heterodisulfide reduction during methanogenesis from acetate. This Methanosarcina acetivorans (strain ATCC 35395 / DSM 2834 / JCM 12185 / C2A) protein is Ion-translocating oxidoreductase complex subunit G.